A 332-amino-acid chain; its full sequence is 2-oxoglutarate-dependent dioxygenase FG08081 (332 aa).

The 105-residue stretch at 176 to 280 folds into the Fe2OG dioxygenase domain; it reads RSKSTLYFLH…RYSISYFLRA (105 aa). Fe cation is bound by residues histidine 201, aspartate 203, and histidine 258. Arginine 271 serves as a coordination point for 2-oxoglutarate.

It belongs to the iron/ascorbate-dependent oxidoreductase family. Fe(2+) serves as cofactor.

It participates in mycotoxin biosynthesis. Its function is as follows. 2-oxoglutarate-dependent dioxygenase; part of the gene cluster that mediates the biosynthesis of butenolide, a mycotoxin that shows antibiotic activity but does not seem to play a major role in the spread of head blight in wheat. Butenolide is derived from glutamic acid via a 4-acetamido-2-butenoic acid intermediate. The predicted function of the NADH:flavin oxidoreductase FG08077, the cytochrome P450 monooxygenase FG08079, the decarboxylase FG08083, and the putative acetyltransferase FG08082 are consistent with this pathway, however, the respective activities of the butelonide biosynthesis cluster enzymes have still to be experimentally determined. This chain is 2-oxoglutarate-dependent dioxygenase FG08081, found in Gibberella zeae (strain ATCC MYA-4620 / CBS 123657 / FGSC 9075 / NRRL 31084 / PH-1) (Wheat head blight fungus).